A 1121-amino-acid polypeptide reads, in one-letter code: RecBCD enzyme subunit RecC (1121 aa).

This sequence belongs to the RecC family. In terms of assembly, heterotrimer of RecB, RecC and RecD. All subunits contribute to DNA-binding.

Its function is as follows. A helicase/nuclease that prepares dsDNA breaks (DSB) for recombinational DNA repair. Binds to DSBs and unwinds DNA via a highly rapid and processive ATP-dependent bidirectional helicase activity. Unwinds dsDNA until it encounters a Chi (crossover hotspot instigator) sequence from the 3' direction. Cuts ssDNA a few nucleotides 3' to the Chi site. The properties and activities of the enzyme are changed at Chi. The Chi-altered holoenzyme produces a long 3'-ssDNA overhang and facilitates RecA-binding to the ssDNA for homologous DNA recombination and repair. Holoenzyme degrades any linearized DNA that is unable to undergo homologous recombination. In the holoenzyme this subunit recognizes the wild-type Chi sequence, and when added to isolated RecB increases its ATP-dependent helicase processivity. This chain is RecBCD enzyme subunit RecC, found in Haemophilus influenzae (strain ATCC 51907 / DSM 11121 / KW20 / Rd).